Consider the following 799-residue polypeptide: High affinity nerve growth factor receptor (799 aa).

A signal peptide spans M1–A33. The Extracellular portion of the chain corresponds to A34–G420. 2 cysteine pairs are disulfide-bonded: C36-C41 and C40-C50. An N-linked (GlcNAc...) asparagine glycan is attached at N67. LRR repeat units follow at residues L90–F113 and R116–G137. N-linked (GlcNAc...) asparagine glycans are attached at residues N121, N190, N204, N255, N264, N320, N325, N341, N361, and N404. An LRRCT domain is found at N148 to V219. C154 and C193 are oxidised to a cystine. Ig-like C2-type domains follow at residues P196 to S285 and D205 to N368. 2 cysteine pairs are disulfide-bonded: C217–C267 and C302–C348. A helical membrane pass occupies residues V421 to V441. The Cytoplasmic segment spans residues L442–G799. Positions M472–I493 are interaction with SQSTM1. Position 499 is a phosphotyrosine; by autocatalysis (Y499). In terms of domain architecture, Protein kinase spans I513–L784. ATP is bound by residues L519–V527 and K547. D653 (proton acceptor) is an active-site residue. A phosphotyrosine; by autocatalysis mark is found at Y679, Y683, Y684, and Y794.

The protein belongs to the protein kinase superfamily. Tyr protein kinase family. Insulin receptor subfamily. In terms of assembly, exists in a dynamic equilibrium between monomeric (low affinity) and dimeric (high affinity) structures. Homodimerization is induced by binding of a NGF dimer. Found in a complex, at least composed of KIDINS220, MAGI2, NTRK1 and RAPGEF2; the complex is mainly formed at late endosomes in a nerve growth factor (NGF)-dependent manner. Interacts with RAPGEF2; the interaction is strengthened after NGF stimulation. Interacts with SQSTM1; bridges NTRK1 to NGFR. Forms a ternary complex with NGFR and KIDINS220; this complex is affected by the expression levels of KIDINS220 and an increase in KIDINS220 expression leads to a decreased association of NGFR and NTRK1. Interacts (phosphorylated upon activation by NGF) with SHC1; mediates SHC1 phosphorylation and activation. Interacts (phosphorylated upon activation by NGF) with PLCG1; mediates PLCG1 phosphorylation and activation. Interacts (phosphorylated) with SH2B1 and SH2B2. Interacts with GRB2. Interacts with PIK3R1. Interacts with FRS2. Interacts with SORT1; may regulate NTRK1 anterograde axonal transport. Interacts with SH2D1A; regulates NTRK1. Interacts with NRADD. Interacts with RAB7A. Interacts with PTPRS. Interacts with USP36; USP36 does not deubiquitinate NTRK1. Interacts with GGA3. Interacts with TSPAN1; this interaction promotes NTRK1 stability. Post-translationally, ligand-mediated autophosphorylation. Interaction with SQSTM1 is phosphotyrosine-dependent. Autophosphorylation at Tyr-499 mediates interaction and phosphorylation of SHC1. N-glycosylated. In terms of processing, ubiquitinated. Undergoes polyubiquitination upon activation; regulated by NGFR. Ubiquitination by NEDD4L leads to degradation. Ubiquitination regulates the internalization of the receptor.

Its subcellular location is the cell membrane. The protein resides in the early endosome membrane. It is found in the late endosome membrane. It localises to the recycling endosome membrane. It carries out the reaction L-tyrosyl-[protein] + ATP = O-phospho-L-tyrosyl-[protein] + ADP + H(+). Its activity is regulated as follows. The pro-survival signaling effect of NTRK1 in neurons requires its endocytosis into signaling early endosomes and its retrograde axonal transport. This is regulated by different proteins including CFL1, RAC1 and SORT1. NTF3 is unable to induce this signaling probably due to the lability of the NTF3-NTRK1 complex in endosomes. SH2D1A inhibits the autophosphorylation of the receptor, and alters the recruitment and activation of downstream effectors and signaling cascades. Regulated by NGFR. Functionally, receptor tyrosine kinase involved in the development and the maturation of the central and peripheral nervous systems through regulation of proliferation, differentiation and survival of sympathetic and nervous neurons. High affinity receptor for NGF which is its primary ligand, it can also bind and be activated by NTF3/neurotrophin-3. However, NTF3 only supports axonal extension through NTRK1 but has no effect on neuron survival. Upon dimeric NGF ligand-binding, undergoes homodimerization, autophosphorylation and activation. Recruits, phosphorylates and/or activates several downstream effectors including SHC1, FRS2, SH2B1, SH2B2 and PLCG1 that regulate distinct overlapping signaling cascades driving cell survival and differentiation. Through SHC1 and FRS2 activates a GRB2-Ras-MAPK cascade that regulates cell differentiation and survival. Through PLCG1 controls NF-Kappa-B activation and the transcription of genes involved in cell survival. Through SHC1 and SH2B1 controls a Ras-PI3 kinase-AKT1 signaling cascade that is also regulating survival. In absence of ligand and activation, may promote cell death, making the survival of neurons dependent on trophic factors. This chain is High affinity nerve growth factor receptor (Ntrk1), found in Mus musculus (Mouse).